Consider the following 293-residue polypeptide: Ribosomal protein L11 methyltransferase (293 aa).

Residues threonine 145, glycine 166, aspartate 188, and asparagine 230 each contribute to the S-adenosyl-L-methionine site.

The protein belongs to the methyltransferase superfamily. PrmA family.

It localises to the cytoplasm. It catalyses the reaction L-lysyl-[protein] + 3 S-adenosyl-L-methionine = N(6),N(6),N(6)-trimethyl-L-lysyl-[protein] + 3 S-adenosyl-L-homocysteine + 3 H(+). Methylates ribosomal protein L11. The polypeptide is Ribosomal protein L11 methyltransferase (Escherichia coli O7:K1 (strain IAI39 / ExPEC)).